A 278-amino-acid polypeptide reads, in one-letter code: Elongation factor Ts (278 aa).

The interval 79 to 82 (TDFV) is involved in Mg(2+) ion dislocation from EF-Tu.

It belongs to the EF-Ts family.

Its subcellular location is the cytoplasm. Its function is as follows. Associates with the EF-Tu.GDP complex and induces the exchange of GDP to GTP. It remains bound to the aminoacyl-tRNA.EF-Tu.GTP complex up to the GTP hydrolysis stage on the ribosome. This chain is Elongation factor Ts, found in Borrelia hermsii (strain HS1 / DAH).